A 75-amino-acid chain; its full sequence is Small ribosomal subunit protein bS18 (75 aa).

Residue A2 is modified to N-acetylalanine.

Belongs to the bacterial ribosomal protein bS18 family. In terms of assembly, part of the 30S ribosomal subunit. Forms a tight heterodimer with protein bS6.

In terms of biological role, binds as a heterodimer with protein bS6 to the central domain of the 16S rRNA, where it helps stabilize the platform of the 30S subunit. The chain is Small ribosomal subunit protein bS18 (rpsR) from Salmonella typhimurium (strain LT2 / SGSC1412 / ATCC 700720).